The sequence spans 305 residues: Carbonic anhydrase 5A, mitochondrial (305 aa).

The transit peptide at 1–38 (MLGRNTWKTSAFSFLVEQMWAPLWSRSMRPGRWCSQRS) directs the protein to the mitochondrion. The Alpha-carbonic anhydrase domain occupies 39–296 (CAWQTSNNTL…LMNRKVWASF (258 aa)). Zn(2+) is bound by residues His-130, His-132, and His-155.

Belongs to the alpha-carbonic anhydrase family. The cofactor is Zn(2+).

Its subcellular location is the mitochondrion. It catalyses the reaction hydrogencarbonate + H(+) = CO2 + H2O. Its activity is regulated as follows. Activated by L- and D-histidine. Activated by L- and D-phenylalanine. Activated by L-adrenaline. Inhibited by coumarins, sulfonamide derivatives such as acetazolamide and Foscarnet (phosphonoformate trisodium salt). Activated by histamine. Mitochondrial carbonic anhydrase that catalyzes the reversible conversion of carbon dioxide to bicarbonate/HCO3. Mitochondria are impermeable to HCO3, and thus this intramitochondrial carbonic anhydrase is pivotal in providing HCO3 for multiple mitochondrial enzymes that catalyze the formation of essential metabolites of intermediary metabolism in the urea and Krebs cycles. The sequence is that of Carbonic anhydrase 5A, mitochondrial from Homo sapiens (Human).